We begin with the raw amino-acid sequence, 427 residues long: Enolase (427 aa).

Gln-164 lines the (2R)-2-phosphoglycerate pocket. Glu-206 acts as the Proton donor in catalysis. Asp-243, Glu-284, and Asp-311 together coordinate Mg(2+). Lys-336, Arg-365, Ser-366, and Lys-387 together coordinate (2R)-2-phosphoglycerate. Lys-336 serves as the catalytic Proton acceptor.

This sequence belongs to the enolase family. Mg(2+) is required as a cofactor.

It localises to the cytoplasm. It is found in the secreted. The protein localises to the cell surface. The catalysed reaction is (2R)-2-phosphoglycerate = phosphoenolpyruvate + H2O. It participates in carbohydrate degradation; glycolysis; pyruvate from D-glyceraldehyde 3-phosphate: step 4/5. Its function is as follows. Catalyzes the reversible conversion of 2-phosphoglycerate (2-PG) into phosphoenolpyruvate (PEP). It is essential for the degradation of carbohydrates via glycolysis. The polypeptide is Enolase (Synechococcus sp. (strain JA-2-3B'a(2-13)) (Cyanobacteria bacterium Yellowstone B-Prime)).